An 80-amino-acid polypeptide reads, in one-letter code: Serine palmitoyltransferase small subunit B (80 aa).

The Cytoplasmic segment spans residues 1-11; the sequence is MDMKNMREYMS. Residues 12 to 29 form a helical membrane-spanning segment; it reads WLYYQYLLITGIYVLEPW. Residues 30–36 lie on the Lumenal side of the membrane; the sequence is EQSIFNT. The helical transmembrane segment at 37 to 57 threads the bilayer; the sequence is VLFTMVAMVIYTSYVFVPIHV. The Cytoplasmic segment spans residues 58–80; sequence RLALEFFCELVGGQPESTVALMT.

Belongs to the SPTSS family. SPTSSB subfamily. In terms of assembly, component of the serine palmitoyltransferase (SPT) complex, which is composed of SPTLC1, SPTLC2 or SPTLC3 and SPTSSA or SPTSSB. The heterodimer consisting of SPTLC1 and SPTLC2/SPTLC3 forms the catalytic core of the enzyme, while SPTSSA or SPTSSB subunits determine substrate specificity. SPT also interacts with ORMDL proteins, especially ORMDL3, which negatively regulate SPT activity in the presence of ceramides.

It is found in the endoplasmic reticulum membrane. Its pathway is lipid metabolism; sphingolipid metabolism. In terms of biological role, component of the serine palmitoyltransferase multisubunit enzyme (SPT) that catalyzes the initial and rate-limiting step in sphingolipid biosynthesis by condensing L-serine and activated acyl-CoA (most commonly palmitoyl-CoA) to form long-chain bases. The SPT complex is composed of SPTLC1, SPTLC2 or SPTLC3 and SPTSSA or SPTSSB. Within this complex, the heterodimer consisting of SPTLC1 and SPTLC2/SPTLC3 forms the catalytic core. Within the SPT complex, SPTSSB stimulates the catalytic activity and plays a role in substrate specificity. SPT complexes with this subunit showing a preference for longer acyl-CoAs. The SPTLC1-SPTLC2-SPTSSB complex shows a strong preference for C18-CoA substrate, while the SPTLC1-SPTLC3-SPTSSB isozyme displays an ability to use a broader range of acyl-CoAs, without apparent preference. The chain is Serine palmitoyltransferase small subunit B (sptssb) from Danio rerio (Zebrafish).